Reading from the N-terminus, the 408-residue chain is MVQVNENYLKLKAGYLFPEIAKRVKLYSQSNKNAEIIKLGIGDVTEPLPRACIEAMGKALDDMGTTDGFRGYGPEQGYAWLREKISEHDFISRGCQISPEEIFVSDGSKCDSSNILDILGKDNSIAVTDPVYPVYVDSNVMTGRTGDALENGTYQGLTYLAINEANNFLPELPEKKVDILYLCFPNNPTGATINKEELKKWVDYALQNKSLILFDAAYEAFIQDNDIPHSIYEIEGAKDCAIEFRSFSKNAGFTGVRCAFTVIPKNLKGLSSTNEEIELWPLWNRRQSTKFNGVSYVVQKGAEAVYSLEGKKQVRGLIDFYMENAKIMKNKLQNSGYKVYGGDNAPYIWIKVPDQMTSWDFFDFLLQKVSVVGTPGSGFGLAGEGYFRLSAFNSRSNVIDAMERIINI.

Residues tyrosine 15 and glycine 42 each coordinate substrate. Residues tyrosine 72, 108–109 (SK), tyrosine 132, asparagine 187, tyrosine 218, and 246–248 (SFS) contribute to the pyridoxal 5'-phosphate site. Residues lysine 109, tyrosine 132, and asparagine 187 each coordinate substrate. Lysine 249 bears the N6-(pyridoxal phosphate)lysine mark. 2 residues coordinate pyridoxal 5'-phosphate: arginine 257 and asparagine 292. The substrate site is built by asparagine 292 and arginine 388.

Belongs to the class-I pyridoxal-phosphate-dependent aminotransferase family. LL-diaminopimelate aminotransferase subfamily. In terms of assembly, homodimer. It depends on pyridoxal 5'-phosphate as a cofactor.

The catalysed reaction is (2S,6S)-2,6-diaminopimelate + 2-oxoglutarate = (S)-2,3,4,5-tetrahydrodipicolinate + L-glutamate + H2O + H(+). It participates in amino-acid biosynthesis; L-lysine biosynthesis via DAP pathway; LL-2,6-diaminopimelate from (S)-tetrahydrodipicolinate (aminotransferase route): step 1/1. Involved in the synthesis of meso-diaminopimelate (m-DAP or DL-DAP), required for both lysine and peptidoglycan biosynthesis. Catalyzes the direct conversion of tetrahydrodipicolinate to LL-diaminopimelate. This chain is LL-diaminopimelate aminotransferase, found in Prochlorococcus marinus (strain AS9601).